Consider the following 407-residue polypeptide: uncharacterized protein (407 aa).

Helical transmembrane passes span I22–V42, L51–A71, A101–V121, V126–V146, V154–V174, A179–L199, G227–Y247, L258–I278, V286–V306, V309–G329, A347–A367, and A369–L389.

Belongs to the major facilitator superfamily. YhhS family.

It localises to the cell inner membrane. This is an uncharacterized protein from Burkholderia mallei (strain NCTC 10229).